Consider the following 205-residue polypeptide: Holliday junction branch migration complex subunit RuvA (205 aa).

Residues 1–64 are domain I; that stretch reads MIGKLKGVID…EDQIKLFGFR (64 aa). Residues 65–143 are domain II; the sequence is SDIEREWFRL…AFANVDPAVV (79 aa). A flexible linker region spans residues 144 to 154; that stretch reads HLAGAVDDDRA. Residues 154–205 are domain III; that stretch reads APRPVKDAISALVNLGYGQPQAAAAIASVARDAGEGAETAQLIRLGLKELAK.

This sequence belongs to the RuvA family. In terms of assembly, homotetramer. Forms an RuvA(8)-RuvB(12)-Holliday junction (HJ) complex. HJ DNA is sandwiched between 2 RuvA tetramers; dsDNA enters through RuvA and exits via RuvB. An RuvB hexamer assembles on each DNA strand where it exits the tetramer. Each RuvB hexamer is contacted by two RuvA subunits (via domain III) on 2 adjacent RuvB subunits; this complex drives branch migration. In the full resolvosome a probable DNA-RuvA(4)-RuvB(12)-RuvC(2) complex forms which resolves the HJ.

Its subcellular location is the cytoplasm. Functionally, the RuvA-RuvB-RuvC complex processes Holliday junction (HJ) DNA during genetic recombination and DNA repair, while the RuvA-RuvB complex plays an important role in the rescue of blocked DNA replication forks via replication fork reversal (RFR). RuvA specifically binds to HJ cruciform DNA, conferring on it an open structure. The RuvB hexamer acts as an ATP-dependent pump, pulling dsDNA into and through the RuvAB complex. HJ branch migration allows RuvC to scan DNA until it finds its consensus sequence, where it cleaves and resolves the cruciform DNA. This chain is Holliday junction branch migration complex subunit RuvA, found in Afipia carboxidovorans (strain ATCC 49405 / DSM 1227 / KCTC 32145 / OM5) (Oligotropha carboxidovorans).